Reading from the N-terminus, the 109-residue chain is Nucleoid-associated protein Spea_1509 (109 aa).

A disordered region spans residues 87-109; the sequence is NQKEKMAEVTGGMQLPPGMKMPF.

Belongs to the YbaB/EbfC family. In terms of assembly, homodimer.

The protein localises to the cytoplasm. Its subcellular location is the nucleoid. Binds to DNA and alters its conformation. May be involved in regulation of gene expression, nucleoid organization and DNA protection. This is Nucleoid-associated protein Spea_1509 from Shewanella pealeana (strain ATCC 700345 / ANG-SQ1).